A 908-amino-acid polypeptide reads, in one-letter code: NADH-quinone oxidoreductase subunit G (908 aa).

Residues 2 to 83 form the 2Fe-2S ferredoxin-type domain; the sequence is ATIHVDGKEY…GTFISIDDEE (82 aa). [2Fe-2S] cluster contacts are provided by cysteine 34, cysteine 45, cysteine 48, and cysteine 67. Residues 83–122 enclose the 4Fe-4S His(Cys)3-ligated-type domain; that stretch reads EAKQFRESVVEWLMTNHPHDCPVCEEGGNCHLQDMTVMTG. [4Fe-4S] cluster-binding residues include histidine 99, cysteine 103, cysteine 106, cysteine 112, cysteine 151, cysteine 154, cysteine 157, cysteine 201, cysteine 228, cysteine 231, cysteine 235, and cysteine 263. Residues 221 to 277 enclose the 4Fe-4S Mo/W bis-MGD-type domain; the sequence is MQFAPSICQQCSIGCNISPGERYGELRRIENRYNGTVNHYFLCDRGRFGYGYVNLKD.

The protein belongs to the complex I 75 kDa subunit family. As to quaternary structure, composed of 13 different subunits. Subunits NuoCD, E, F, and G constitute the peripheral sector of the complex. [2Fe-2S] cluster serves as cofactor. Requires [4Fe-4S] cluster as cofactor.

It localises to the cytoplasm. Its subcellular location is the cell inner membrane. The catalysed reaction is a quinone + NADH + 5 H(+)(in) = a quinol + NAD(+) + 4 H(+)(out). Its function is as follows. NDH-1 shuttles electrons from NADH, via FMN and iron-sulfur (Fe-S) centers, to quinones in the respiratory chain. The immediate electron acceptor for the enzyme in this species is believed to be ubiquinone. Couples the redox reaction to proton translocation (for every two electrons transferred, four hydrogen ions are translocated across the cytoplasmic membrane), and thus conserves the redox energy in a proton gradient. In Escherichia coli (strain K12), this protein is NADH-quinone oxidoreductase subunit G (nuoG).